The following is a 206-amino-acid chain: Small ribosomal subunit protein uS4 (206 aa).

The 61-residue stretch at 96 to 156 (CRLDNVVYRM…EKSSNQLRIV (61 aa)) folds into the S4 RNA-binding domain.

It belongs to the universal ribosomal protein uS4 family. As to quaternary structure, part of the 30S ribosomal subunit. Contacts protein S5. The interaction surface between S4 and S5 is involved in control of translational fidelity.

One of the primary rRNA binding proteins, it binds directly to 16S rRNA where it nucleates assembly of the body of the 30S subunit. Functionally, with S5 and S12 plays an important role in translational accuracy. The chain is Small ribosomal subunit protein uS4 from Pseudomonas putida (strain W619).